A 428-amino-acid polypeptide reads, in one-letter code: C4-dicarboxylate transport protein (428 aa).

The next 9 helical transmembrane spans lie at 8–28 (SLYV…HFYP), 44–64 (LIKM…IAGM), 76–96 (VALL…LIIV), 142–162 (IGAF…LFGF), 184–204 (VIFG…FGAM), 222–242 (LIIC…GSIA), 289–309 (VVGL…SIYL), 326–346 (IFHQ…AAGV), and 352–372 (IVLA…LALI).

Belongs to the dicarboxylate/amino acid:cation symporter (DAACS) (TC 2.A.23) family.

The protein resides in the cell inner membrane. Responsible for the transport of dicarboxylates such as succinate, fumarate, and malate from the periplasm across the membrane. The sequence is that of C4-dicarboxylate transport protein from Klebsiella pneumoniae (strain 342).